We begin with the raw amino-acid sequence, 352 residues long: Ferrochelatase (352 aa).

Residues His222 and Glu303 each coordinate Fe cation.

Belongs to the ferrochelatase family.

The protein resides in the cytoplasm. The enzyme catalyses heme b + 2 H(+) = protoporphyrin IX + Fe(2+). Its pathway is porphyrin-containing compound metabolism; protoheme biosynthesis; protoheme from protoporphyrin-IX: step 1/1. Its function is as follows. Catalyzes the ferrous insertion into protoporphyrin IX. This Brucella melitensis biotype 2 (strain ATCC 23457) protein is Ferrochelatase.